Reading from the N-terminus, the 267-residue chain is Undecaprenyl-diphosphatase 2 (267 aa).

The next 8 membrane-spanning stretches (helical) occupy residues 4–24 (IYFI…FLPI), 43–63 (EEKV…CWLF), 84–104 (FAVI…LFIH), 109–129 (VLFN…IILW), 147–167 (IGFK…IPGT), 186–206 (AATE…AIYD), 219–239 (ILAI…VVNA), and 243–263 (FVAK…GLII).

The protein belongs to the UppP family.

It is found in the cell inner membrane. It catalyses the reaction di-trans,octa-cis-undecaprenyl diphosphate + H2O = di-trans,octa-cis-undecaprenyl phosphate + phosphate + H(+). Catalyzes the dephosphorylation of undecaprenyl diphosphate (UPP). Confers resistance to bacitracin. The chain is Undecaprenyl-diphosphatase 2 from Shewanella oneidensis (strain ATCC 700550 / JCM 31522 / CIP 106686 / LMG 19005 / NCIMB 14063 / MR-1).